Here is a 208-residue protein sequence, read N- to C-terminus: T-cell surface glycoprotein CD8 beta chain (208 aa).

The first 21 residues, 1-21 (MQPWLWLVFSVKLSALWGSSA), serve as a signal peptide directing secretion. Residues 22–131 (LLQTPSSLLV…MVVFGTGTKL (110 aa)) enclose the Ig-like V-type domain. Residues 22–168 (LLQTPSSLLV…KTQKGLTCGL (147 aa)) lie on the Extracellular side of the membrane. N-linked (GlcNAc...) asparagine glycans are attached at residues asparagine 34, asparagine 88, and asparagine 94. Cysteine 41 and cysteine 115 form a disulfide bridge. The chain crosses the membrane as a helical span at residues 169-189 (ITLSLLVACILVLLVSLSVAI). The Cytoplasmic portion of the chain corresponds to 190 to 208 (HFHCMRRRARIHFMKQFHK).

Forms disulfide-linked heterodimers with CD8A at the cell surface. Interacts with CD3D; this interaction couples TCR-CD3 with CD8. Interacts with LCK. Post-translationally, phosphorylated as a consequence of T-cell activation. Palmitoylated at the cytoplasmic tail and thereby targets the heterodimer CD8A/CD8B to lipid rafts unlike CD8A homodimers.

It localises to the cell membrane. Functionally, integral membrane glycoprotein that plays an essential role in the immune response and serves multiple functions in responses against both external and internal offenses. In T-cells, functions primarily as a coreceptor for MHC class I molecule:peptide complex. The antigens presented by class I peptides are derived from cytosolic proteins while class II derived from extracellular proteins. Interacts simultaneously with the T-cell receptor (TCR) and the MHC class I proteins presented by antigen presenting cells (APCs). In turn, recruits the Src kinase LCK to the vicinity of the TCR-CD3 complex. A palmitoylation site in the cytoplasmic tail of CD8B chain contributes to partitioning of CD8 into the plasma membrane lipid rafts where signaling proteins are enriched. Once LCK recruited, it initiates different intracellular signaling pathways by phosphorylating various substrates ultimately leading to lymphokine production, motility, adhesion and activation of cytotoxic T-lymphocytes (CTLs). Additionally, plays a critical role in thymic selection of CD8+ T-cells. In Rattus norvegicus (Rat), this protein is T-cell surface glycoprotein CD8 beta chain (Cd8b).